The chain runs to 1205 residues: Nitric oxide synthase 3 (1205 aa).

Residues 1–73 (MGNLKSVGQE…PPEGPKFPRV (73 aa)) form a disordered region. G2 carries N-myristoyl glycine lipidation. 2 S-palmitoyl cysteine lipidation sites follow: C15 and C26. Gly residues predominate over residues 15–27 (CGLGLGLGLGLCG). Positions 33-47 (TPAPEPSRAPAPATP) are enriched in pro residues. Positions 96 and 101 each coordinate Zn(2+). The interval 100–488 (RCLGSLVLPR…PDPWKGSAAK (389 aa)) is interaction with NOSIP. S104 provides a ligand contact to (6R)-L-erythro-5,6,7,8-tetrahydrobiopterin. S116 carries the phosphoserine; by CDK5 modification. A heme b-binding site is contributed by C186. Q249, W358, Y359, E363, and N368 together coordinate L-arginine. Residues A448, W449, and F462 each contribute to the (6R)-L-erythro-5,6,7,8-tetrahydrobiopterin site. Y477 is a heme b binding site. Residues 492-512 (IARKKTFKEVANAVKISASLM) are calmodulin-binding. Residue T497 is modified to Phosphothreonine; by AMPK. The 184-residue stretch at 522–705 (ASILYASETV…AFRGWAQAAF (184 aa)) folds into the Flavodoxin-like domain. FMN-binding residues include S528, E529, T530, R532, S574, and T575. A phosphoserine mark is found at S617, S635, and S640. FMN-binding residues include S656, C663, E689, and Q693. In terms of domain architecture, FAD-binding FR-type spans 758-1004 (RKMFQATVLS…IRAAPSFRLP (247 aa)). R778 provides a ligand contact to NADP(+). An FAD-binding site is contributed by H800. Positions 820–848 (EDPTPPTESVGVEQLEKGSPGGPPPSWVR) are disordered. At S838 the chain carries Phosphoserine. FAD is bound by residues R940, Y942, S943, T958, A960, Y964, V977, C978, and S979. Residues T1018, R1051, S1080, R1081, K1087, Y1089, and Q1091 each coordinate NADP(+). Phosphothreonine is present on T1177. Residue S1179 is modified to Phosphoserine; by AMPK. S1181 is modified (phosphoserine).

Belongs to the NOS family. Homodimer. Interacts with NOSIP and NOSTRIN. Interacts with HSP90AB1. Forms a complex with ASL, ASS1 and SLC7A1; the complex regulates cell-autonomous L-arginine synthesis and citrulline recycling while channeling extracellular L-arginine to nitric oxide synthesis pathway. Heme b serves as cofactor. It depends on FAD as a cofactor. Requires FMN as cofactor. (6R)-L-erythro-5,6,7,8-tetrahydrobiopterin is required as a cofactor. Phosphorylation by AMPK at Ser-1179 in the presence of Ca(2+)-calmodulin (CaM) activates activity. In absence of Ca(2+)-calmodulin, AMPK also phosphorylates Thr-497, resulting in inhibition of activity. Phosphorylation of Ser-116 by CDK5 reduces activity.

It is found in the membrane. Its subcellular location is the caveola. The protein localises to the cytoplasm. It localises to the cytoskeleton. The protein resides in the golgi apparatus. It is found in the cell membrane. It catalyses the reaction 2 L-arginine + 3 NADPH + 4 O2 + H(+) = 2 L-citrulline + 2 nitric oxide + 3 NADP(+) + 4 H2O. With respect to regulation, stimulated by calcium/calmodulin. Inhibited by NOSIP and NOSTRIN. Its function is as follows. Produces nitric oxide (NO) which is implicated in vascular smooth muscle relaxation through a cGMP-mediated signal transduction pathway. NO mediates vascular endothelial growth factor (VEGF)-induced angiogenesis in coronary vessels and promotes blood clotting through the activation of platelets. The chain is Nitric oxide synthase 3 (NOS3) from Sus scrofa (Pig).